Consider the following 140-residue polypeptide: Transcription antitermination protein NusB (140 aa).

The protein belongs to the NusB family.

In terms of biological role, involved in transcription antitermination. Required for transcription of ribosomal RNA (rRNA) genes. Binds specifically to the boxA antiterminator sequence of the ribosomal RNA (rrn) operons. The polypeptide is Transcription antitermination protein NusB (Myxococcus xanthus (strain DK1622)).